A 449-amino-acid chain; its full sequence is Heterogeneous nuclear ribonucleoprotein H2 (449 aa).

N-acetylmethionine is present on Met-1. The residue at position 2 (Met-2) is an N-acetylmethionine; in Heterogeneous nuclear ribonucleoprotein H2, N-terminally processed. The 80-residue stretch at 11–90 (FVVKVRGLPW…RYVEVFKSNS (80 aa)) folds into the RRM 1 domain. Phosphoserine is present on Ser-23. Residue Lys-35 forms a Glycyl lysine isopeptide (Lys-Gly) (interchain with G-Cter in SUMO2) linkage. A phosphoserine mark is found at Ser-54 and Ser-63. A Glycyl lysine isopeptide (Lys-Gly) (interchain with G-Cter in SUMO2) cross-link involves residue Lys-87. Position 90 is a phosphoserine (Ser-90). Residue Lys-98 forms a Glycyl lysine isopeptide (Lys-Gly) (interchain with G-Cter in SUMO2) linkage. The RRM 2 domain occupies 111-188 (GFVRLRGLPF…RYIEIFKSSR (78 aa)). The residue at position 233 (Arg-233) is a Dimethylated arginine; alternate. Arg-233 carries the omega-N-methylarginine; alternate modification. The 1-1 repeat unit spans residues 234 to 249 (GAYGGGYGGYDDYGGY). Residues 234 to 433 (GAYGGGYGGY…YGGQSSMSGY (200 aa)) are 2 X 16 AA Gly-rich approximate repeats. Phosphotyrosine is present on Tyr-246. Residues 289–364 (HCVHMRGLPY…RYVELFLNST (76 aa)) form the RRM 3 domain. Position 310 is a phosphoserine (Ser-310). 3 tandem repeats follow at residues 354–372 (HRYVELFLNSTAGTSGGAY), 374–392 (HSYVELFLNSTAGASGGAY), and 418–433 (GGYGGGYGGQSSMSGY). Residues 354–392 (HRYVELFLNSTAGTSGGAYDHSYVELFLNSTAGASGGAY) form a 2 X 19 AA perfect repeats region.

Component of a ribonucleoprotein complex containing mRNAs and RNA-binding proteins including DDX5, HNRNPH2 and SRSF1 as well as splicing regulator ARVCF. Interacts with TXNL4/DIM1.

Its subcellular location is the nucleus. The protein localises to the nucleoplasm. In terms of biological role, this protein is a component of the heterogeneous nuclear ribonucleoprotein (hnRNP) complexes which provide the substrate for the processing events that pre-mRNAs undergo before becoming functional, translatable mRNAs in the cytoplasm. Binds poly(RG). This is Heterogeneous nuclear ribonucleoprotein H2 (HNRNPH2) from Bos taurus (Bovine).